Here is a 261-residue protein sequence, read N- to C-terminus: DNA repair protein RecO (261 aa).

This sequence belongs to the RecO family.

Functionally, involved in DNA repair and RecF pathway recombination. In Chlorobium limicola (strain DSM 245 / NBRC 103803 / 6330), this protein is DNA repair protein RecO.